Consider the following 404-residue polypeptide: Imidazolonepropionase (404 aa).

Positions 73 and 75 each coordinate Fe(3+). Zn(2+) contacts are provided by histidine 73 and histidine 75. The 4-imidazolone-5-propanoate site is built by arginine 82, tyrosine 145, and histidine 178. Position 145 (tyrosine 145) interacts with N-formimidoyl-L-glutamate. Histidine 243 lines the Fe(3+) pocket. Histidine 243 provides a ligand contact to Zn(2+). A 4-imidazolone-5-propanoate-binding site is contributed by glutamine 246. Aspartate 318 serves as a coordination point for Fe(3+). Aspartate 318 is a binding site for Zn(2+). Residues asparagine 320 and glycine 322 each contribute to the N-formimidoyl-L-glutamate site. Serine 323 provides a ligand contact to 4-imidazolone-5-propanoate.

It belongs to the metallo-dependent hydrolases superfamily. HutI family. Zn(2+) is required as a cofactor. Requires Fe(3+) as cofactor.

The protein resides in the cytoplasm. The enzyme catalyses 4-imidazolone-5-propanoate + H2O = N-formimidoyl-L-glutamate. The protein operates within amino-acid degradation; L-histidine degradation into L-glutamate; N-formimidoyl-L-glutamate from L-histidine: step 3/3. Functionally, catalyzes the hydrolytic cleavage of the carbon-nitrogen bond in imidazolone-5-propanoate to yield N-formimidoyl-L-glutamate. It is the third step in the universal histidine degradation pathway. The polypeptide is Imidazolonepropionase (Bradyrhizobium sp. (strain BTAi1 / ATCC BAA-1182)).